A 271-amino-acid polypeptide reads, in one-letter code: Malonyl-[acyl-carrier protein] O-methyltransferase (271 aa).

It belongs to the methyltransferase superfamily.

It carries out the reaction malonyl-[ACP] + S-adenosyl-L-methionine = malonyl-[ACP] methyl ester + S-adenosyl-L-homocysteine. It participates in cofactor biosynthesis; biotin biosynthesis. Functionally, converts the free carboxyl group of a malonyl-thioester to its methyl ester by transfer of a methyl group from S-adenosyl-L-methionine (SAM). It allows to synthesize pimeloyl-ACP via the fatty acid synthetic pathway. This is Malonyl-[acyl-carrier protein] O-methyltransferase from Halalkalibacterium halodurans (strain ATCC BAA-125 / DSM 18197 / FERM 7344 / JCM 9153 / C-125) (Bacillus halodurans).